The following is a 189-amino-acid chain: Hypoxanthine/guanine phosphoribosyltransferase (189 aa).

This sequence belongs to the purine/pyrimidine phosphoribosyltransferase family. Archaeal HPRT subfamily. In terms of assembly, homodimer.

The protein localises to the cytoplasm. The enzyme catalyses IMP + diphosphate = hypoxanthine + 5-phospho-alpha-D-ribose 1-diphosphate. It catalyses the reaction GMP + diphosphate = guanine + 5-phospho-alpha-D-ribose 1-diphosphate. It participates in purine metabolism; IMP biosynthesis via salvage pathway; IMP from hypoxanthine: step 1/1. Catalyzes a salvage reaction resulting in the formation of IMP that is energically less costly than de novo synthesis. In Methanothermus fervidus (strain ATCC 43054 / DSM 2088 / JCM 10308 / V24 S), this protein is Hypoxanthine/guanine phosphoribosyltransferase.